The sequence spans 218 residues: N-alpha-acetyltransferase 11 (218 aa).

Residues 1–58 form an interaction with NAA15 region; the sequence is MNIRNARPDDLMNMQHCNLLCLPENYQMKYYFYHGLSWPQLSYIAEDEDGKIVGYVLA. The 152-residue stretch at 1–152 folds into the N-acetyltransferase domain; sequence MNIRNARPDD…DAYAMKRDLS (152 aa). The interval 175-218 is disordered; that stretch reads EETQGGTLPDAGEACLPKNPTSKDSGSSDSTDVQDSSEDLDSIS. Residues 196–205 show a composition bias toward low complexity; that stretch reads SKDSGSSDST. The span at 209–218 shows a compositional bias: acidic residues; sequence DSSEDLDSIS.

This sequence belongs to the acetyltransferase family. ARD1 subfamily. In terms of assembly, component of the N-terminal acetyltransferase A (NatA) complex composed of NAA11 and NAA15. Interacts with HIF1A.

Its subcellular location is the cytoplasm. The protein resides in the nucleus. It catalyses the reaction N-terminal glycyl-[protein] + acetyl-CoA = N-terminal N(alpha)-acetylglycyl-[protein] + CoA + H(+). The enzyme catalyses N-terminal L-alanyl-[protein] + acetyl-CoA = N-terminal N(alpha)-acetyl-L-alanyl-[protein] + CoA + H(+). It carries out the reaction N-terminal L-seryl-[protein] + acetyl-CoA = N-terminal N(alpha)-acetyl-L-seryl-[protein] + CoA + H(+). The catalysed reaction is N-terminal L-valyl-[protein] + acetyl-CoA = N-terminal N(alpha)-acetyl-L-valyl-[protein] + CoA + H(+). It catalyses the reaction N-terminal L-cysteinyl-[protein] + acetyl-CoA = N-terminal N(alpha)-acetyl-L-cysteinyl-[protein] + CoA + H(+). The enzyme catalyses N-terminal L-threonyl-[protein] + acetyl-CoA = N-terminal N(alpha)-acetyl-L-threonyl-[protein] + CoA + H(+). In terms of biological role, displays alpha (N-terminal) acetyltransferase activity. Proposed alternative catalytic subunit of the N-terminal acetyltransferase A (NatA) complex. This Mus musculus (Mouse) protein is N-alpha-acetyltransferase 11 (Naa11).